An 807-amino-acid chain; its full sequence is Glycerol-3-phosphate acyltransferase (807 aa).

The short motif at 308 to 313 (CHRSHM) is the HXXXXD motif element.

This sequence belongs to the GPAT/DAPAT family.

The protein localises to the cell inner membrane. The enzyme catalyses sn-glycerol 3-phosphate + an acyl-CoA = a 1-acyl-sn-glycero-3-phosphate + CoA. It functions in the pathway phospholipid metabolism; CDP-diacylglycerol biosynthesis; CDP-diacylglycerol from sn-glycerol 3-phosphate: step 1/3. The sequence is that of Glycerol-3-phosphate acyltransferase from Shewanella baltica (strain OS155 / ATCC BAA-1091).